The sequence spans 301 residues: ATP synthase gamma chain (301 aa).

This sequence belongs to the ATPase gamma chain family. As to quaternary structure, F-type ATPases have 2 components, CF(1) - the catalytic core - and CF(0) - the membrane proton channel. CF(1) has five subunits: alpha(3), beta(3), gamma(1), delta(1), epsilon(1). CF(0) has three main subunits: a, b and c.

It is found in the cell inner membrane. Its function is as follows. Produces ATP from ADP in the presence of a proton gradient across the membrane. The gamma chain is believed to be important in regulating ATPase activity and the flow of protons through the CF(0) complex. The polypeptide is ATP synthase gamma chain (Helicobacter pylori (strain P12)).